The sequence spans 366 residues: Caffeic acid 3-O-methyltransferase (366 aa).

131 to 137 lines the substrate pocket; sequence MNQDKIL. Residues 163-181 are substrate binding; the sequence is AFEYHGTDPRFNKIFNRGM. 5 residues coordinate S-adenosyl-L-methionine: glycine 209, aspartate 232, aspartate 252, methionine 253, and lysine 266. Residue histidine 270 is the Proton acceptor of the active site.

This sequence belongs to the class I-like SAM-binding methyltransferase superfamily. Cation-independent O-methyltransferase family. COMT subfamily. As to quaternary structure, homodimer.

It catalyses the reaction (E)-caffeate + S-adenosyl-L-methionine = (E)-ferulate + S-adenosyl-L-homocysteine + H(+). The protein operates within aromatic compound metabolism; phenylpropanoid biosynthesis. Functionally, catalyzes the conversion of caffeic acid to ferulic acid and of 5-hydroxyferulic acid to sinapic acid. The resulting products may subsequently be converted to the corresponding alcohols that are incorporated into lignins. In Eucalyptus gunnii (Cider gum), this protein is Caffeic acid 3-O-methyltransferase (OMT).